The primary structure comprises 1063 residues: Structural polyprotein (1063 aa).

A disordered region spans residues 1–131 (MASTTPITME…LGPPTNPFQA (131 aa)). A human C1QBP/SF2P32-binding region spans residues 30–69 (GASQSRRPRPPRQRDSSTSGDDSGRDSGGPRRRRGNRGRG). Position 46 is a phosphoserine; by host (serine 46). The segment covering 59–69 (PRRRRGNRGRG) has biased composition (basic residues). The segment covering 93–107 (APKPSRAPPQQPQPP) has biased composition (pro residues). Cysteine 153 and cysteine 197 are disulfide-bonded. The tract at residues 279–300 (GAPQAFLAGLLLAAVAVGTARA) is functions as E2 signal peptide. Topologically, residues 301–534 (GLQPRADMAA…LWLATANALS (234 aa)) are extracellular. A disordered region spans residues 305–347 (RADMAAPPAPPQPPCAHGQHYGHHHHQLPFLGHDGHHGGTLRV). 4 N-linked (GlcNAc...) asparagine; by host glycosylation sites follow: asparagine 353, asparagine 371, asparagine 410, and asparagine 429. The chain crosses the membrane as a helical span at residues 535-555 (LDHALAAFVLLFPWVLIFMVC). Topologically, residues 556 to 582 (RRACRRRGAAAALTAVVLQGYNPPAYG) are cytoplasmic. Residues 563-582 (GAAAALTAVVLQGYNPPAYG) form a functions as E1 signal peptide region. The Extracellular segment spans residues 583 to 1028 (EEAFTYLCTA…QTWAEWAAAH (446 aa)). Disulfide bonds link cysteine 590/cysteine 595, cysteine 619/cysteine 824, cysteine 641/cysteine 653, cysteine 699/cysteine 712, cysteine 758/cysteine 767, cysteine 807/cysteine 817, cysteine 931/cysteine 934, and cysteine 950/cysteine 983. N-linked (GlcNAc...) asparagine; by host glycosylation occurs at asparagine 658. Ca(2+) contacts are provided by asparagine 670 and alanine 671. Ca(2+) is bound by residues aspartate 718 and threonine 719. Residues asparagine 759 and asparagine 791 are each glycosylated (N-linked (GlcNAc...) asparagine; by host). O-linked (GalNAc...) threonine; by host glycans are attached at residues threonine 1011 and threonine 1012. A helical membrane pass occupies residues 1029-1049 (WWQLTLGAVCALLLAGLLACC). The Extracellular portion of the chain corresponds to 1050–1063 (AKCLYYLRGAIAPR).

In terms of assembly, homodimer; further assembles into homooligomer. Interacts with human C1QBP. Interacts (via N-terminus) with protease/methyltransferase p150. Heterodimer with spike glycoprotein E2. As to quaternary structure, heterodimer with spike glycoprotein E1. Post-translationally, structural polyprotein: Specific enzymatic cleavages in vivo yield mature proteins. Two signal peptidase-mediated cleavages within the polyprotein produce the structural proteins capsid, E2, and E1. The E2 signal peptide remains attached to the C-terminus of the capsid protein after cleavage by the signal peptidase. Another signal peptide at E2 C-terminus directs E1 to the ER, with a similar mechanism. In terms of processing, contains three N-linked oligosaccharides. Capsid is phosphorylated on Ser-46 by host. This phosphorylation negatively regulates capsid protein RNA-binding activity. Dephosphorylated by human PP1A.

It localises to the virion. Its subcellular location is the host cytoplasm. It is found in the host mitochondrion. The protein localises to the virion membrane. The protein resides in the host Golgi apparatus membrane. In terms of biological role, capsid protein interacts with genomic RNA and assembles into icosahedric core particles 65-70 nm in diameter. The resulting nucleocapsid eventually associates with the cytoplasmic domain of E2 at the cell membrane, leading to budding and formation of mature virions from host Golgi membranes. Phosphorylation negatively regulates RNA-binding activity, possibly delaying virion assembly during the viral replication phase. Capsid protein dimerizes and becomes disulfide-linked in the virion. Modulates genomic RNA replication. Modulates subgenomic RNA synthesis by interacting with human C1QBP/SF2P32. Induces both perinuclear clustering of mitochondria and the formation of electron-dense intermitochondrial plaques, both hallmarks of rubella virus infected cells. Induces apoptosis when expressed in transfected cells. Responsible for viral attachment to target host cell, by binding to the cell receptor. Its transport to the plasma membrane depends on interaction with E1 protein. The surface glycoproteins display an irregular helical organization and a pseudo-tetrameric inner nucleocapsid arrangement. Functionally, class II viral fusion protein. Fusion activity is inactive as long as E1 is bound to E2 in mature virion. After virus attachment to target cell and clathrin-mediated endocytosis, acidification of the endosome would induce dissociation of E1/E2 heterodimer and concomitant trimerization of the E1 subunits. This E1 homotrimer is fusion active, and promotes release of viral nucleocapsid in cytoplasm after endosome and viral membrane fusion. The cytoplasmic tail of spike glycoprotein E1 modulates virus release. The surface glycoproteins display an irregular helical organization and a pseudo-tetrameric inner nucleocapsid arrangement. The chain is Structural polyprotein from Rubella virus (strain RN-UK86) (RUBV).